The sequence spans 1171 residues: ATP-dependent helicase/deoxyribonuclease subunit B (1171 aa).

The UvrD-like helicase ATP-binding domain maps to 1–343; sequence MSLRFVIGRA…LVAEENYRYR (343 aa). 8 to 15 lines the ATP pocket; it reads GRAGSGKS. Residues 281-587 form the UvrD-like helicase C-terminal domain; sequence MEQPRFHSPA…QFANIPPSLD (307 aa). The [4Fe-4S] cluster site is built by cysteine 805, cysteine 1129, cysteine 1132, and cysteine 1138.

It belongs to the helicase family. AddB/RexB type 1 subfamily. As to quaternary structure, heterodimer of AddA and AddB. The cofactor is Mg(2+). [4Fe-4S] cluster is required as a cofactor.

Its function is as follows. The heterodimer acts as both an ATP-dependent DNA helicase and an ATP-dependent, dual-direction single-stranded exonuclease. Recognizes the chi site generating a DNA molecule suitable for the initiation of homologous recombination. The AddB subunit has 5' -&gt; 3' nuclease activity but not helicase activity. The chain is ATP-dependent helicase/deoxyribonuclease subunit B from Bacillus thuringiensis subsp. konkukian (strain 97-27).